Reading from the N-terminus, the 60-residue chain is U1-theraphotoxin-Agm3a (60 aa).

A signal peptide spans 1 to 21 (MKFSVLVFILGLVLLLALSSA). Positions 22–29 (TEMEENAR) are excised as a propeptide. Cystine bridges form between C31–C45, C38–C50, and C44–C57.

This sequence belongs to the neurotoxin 10 (Hwtx-1) family. 63 (VsTx1) subfamily. In terms of tissue distribution, expressed by the venom gland.

The protein resides in the secreted. Functionally, inhibits sodium channels Nav1.7/SCN9A and potassium channels Kv11.1/KCNH2. Also binds the voltage-sensor domain of the potassium channel KvAP (from the archaeon Aeropyrum pernix) with very slow apparent binding kinetics and affects channel gating. Reaches its target by dynamically partitioning into anionic or zwitterionic headgroup lipid membranes. May bind to the open state of KvAP. This Acanthoscurria gomesiana (Tarantula spider) protein is U1-theraphotoxin-Agm3a.